Reading from the N-terminus, the 239-residue chain is Serine protease SplC (239 aa).

The signal sequence occupies residues 1-36 (MNKNIVIKSMAALAILTSATGINAAVVEETQQIANA). Active-site charge relay system residues include His-75, Asp-113, and Ser-193.

Belongs to the peptidase S1B family.

The protein resides in the secreted. In Staphylococcus aureus (strain MSSA476), this protein is Serine protease SplC (splC).